A 502-amino-acid chain; its full sequence is RxLR effector protein BLN06 (502 aa).

The N-terminal stretch at 1–20 (MTLLHCWLLLVGHLASTAYA) is a signal peptide. N-linked (GlcNAc...) asparagine glycosylation occurs at Asn-38. The short motif at 50–53 (LEER) is the dEER element.

This sequence belongs to the RxLR effector family.

Its subcellular location is the secreted. The protein localises to the host cell membrane. In terms of biological role, secreted effector that triggers a robust hypersensitive response (HR) in Lactuca serriola LS102. The response to BLN06 was visible as chlorosis but not as strong necrosis. In Bremia lactucae (Lettuce downy mildew), this protein is RxLR effector protein BLN06.